A 415-amino-acid polypeptide reads, in one-letter code: Gamma-glutamyl phosphate reductase (415 aa).

This sequence belongs to the gamma-glutamyl phosphate reductase family.

It localises to the cytoplasm. The enzyme catalyses L-glutamate 5-semialdehyde + phosphate + NADP(+) = L-glutamyl 5-phosphate + NADPH + H(+). It participates in amino-acid biosynthesis; L-proline biosynthesis; L-glutamate 5-semialdehyde from L-glutamate: step 2/2. Functionally, catalyzes the NADPH-dependent reduction of L-glutamate 5-phosphate into L-glutamate 5-semialdehyde and phosphate. The product spontaneously undergoes cyclization to form 1-pyrroline-5-carboxylate. The sequence is that of Gamma-glutamyl phosphate reductase from Listeria monocytogenes serotype 4a (strain HCC23).